The sequence spans 272 residues: Magnetosome protein MamQ 1 (272 aa).

At methionine 1–proline 46 the chain is on the cytoplasmic side. The helical transmembrane segment at valine 47–methionine 67 threads the bilayer. At arginine 68–lysine 272 the chain is on the lumenal side.

Belongs to the LemA family.

The protein localises to the magnetosome membrane. Essential for magnetosome formation. Can be used to induce magnetosome formation. The chain is Magnetosome protein MamQ 1 (mamQ1) from Paramagnetospirillum magneticum (strain ATCC 700264 / AMB-1) (Magnetospirillum magneticum).